A 171-amino-acid chain; its full sequence is Large ribosomal subunit protein uL10 (171 aa).

This sequence belongs to the universal ribosomal protein uL10 family. As to quaternary structure, part of the ribosomal stalk of the 50S ribosomal subunit. The N-terminus interacts with L11 and the large rRNA to form the base of the stalk. The C-terminus forms an elongated spine to which L12 dimers bind in a sequential fashion forming a multimeric L10(L12)X complex.

Forms part of the ribosomal stalk, playing a central role in the interaction of the ribosome with GTP-bound translation factors. This Methylocella silvestris (strain DSM 15510 / CIP 108128 / LMG 27833 / NCIMB 13906 / BL2) protein is Large ribosomal subunit protein uL10.